A 343-amino-acid chain; its full sequence is Dihydroorotase (343 aa).

Zn(2+) contacts are provided by His-13 and His-15. Residues 15–17 and Asn-41 each bind substrate; that span reads HLR. Residues Lys-99, His-136, and His-174 each contribute to the Zn(2+) site. Lys-99 carries the post-translational modification N6-carboxylysine. His-136 serves as a coordination point for substrate. Leu-219 contributes to the substrate binding site. Asp-247 is a binding site for Zn(2+). The active site involves Asp-247. His-251 and Ala-263 together coordinate substrate.

This sequence belongs to the metallo-dependent hydrolases superfamily. DHOase family. Class II DHOase subfamily. In terms of assembly, homodimer. The cofactor is Zn(2+).

It carries out the reaction (S)-dihydroorotate + H2O = N-carbamoyl-L-aspartate + H(+). Its pathway is pyrimidine metabolism; UMP biosynthesis via de novo pathway; (S)-dihydroorotate from bicarbonate: step 3/3. Catalyzes the reversible cyclization of carbamoyl aspartate to dihydroorotate. The sequence is that of Dihydroorotase from Alkalilimnicola ehrlichii (strain ATCC BAA-1101 / DSM 17681 / MLHE-1).